Consider the following 316-residue polypeptide: Transaldolase (316 aa).

Catalysis depends on Lys-127, which acts as the Schiff-base intermediate with substrate.

This sequence belongs to the transaldolase family. Type 2 subfamily.

Its subcellular location is the cytoplasm. It catalyses the reaction D-sedoheptulose 7-phosphate + D-glyceraldehyde 3-phosphate = D-erythrose 4-phosphate + beta-D-fructose 6-phosphate. Its pathway is carbohydrate degradation; pentose phosphate pathway; D-glyceraldehyde 3-phosphate and beta-D-fructose 6-phosphate from D-ribose 5-phosphate and D-xylulose 5-phosphate (non-oxidative stage): step 2/3. In terms of biological role, transaldolase is important for the balance of metabolites in the pentose-phosphate pathway. The polypeptide is Transaldolase (Helicobacter pylori (strain HPAG1)).